The chain runs to 326 residues: tRNA-modifying protein YgfZ (326 aa).

Residues tryptophan 27 and tryptophan 189 each contribute to the folate site.

This sequence belongs to the tRNA-modifying YgfZ family.

It is found in the cytoplasm. Its function is as follows. Folate-binding protein involved in regulating the level of ATP-DnaA and in the modification of some tRNAs. It is probably a key factor in regulatory networks that act via tRNA modification, such as initiation of chromosomal replication. The polypeptide is tRNA-modifying protein YgfZ (Escherichia coli O6:H1 (strain CFT073 / ATCC 700928 / UPEC)).